We begin with the raw amino-acid sequence, 64 residues long: Conotoxin Pu5.2 (64 aa).

The signal sequence occupies residues Met-1–Ala-22. The propeptide occupies Arg-23–Arg-52. Ile-63 bears the Isoleucine amide mark.

It belongs to the conotoxin T superfamily. Contains 2 disulfide bonds that can be either 'C1-C3, C2-C4' or 'C1-C4, C2-C3', since these disulfide connectivities have been observed for conotoxins with cysteine framework V (for examples, see AC P0DQQ7 and AC P81755). Expressed by the venom duct.

The protein resides in the secreted. The chain is Conotoxin Pu5.2 from Conus pulicarius (Flea-bitten cone).